The following is a 124-amino-acid chain: Small ribosomal subunit protein uS12 (124 aa).

Positions 1-24 (MPTISQLVRKGRAKITKKSKSAAL) are disordered. A compositionally biased stretch (basic residues) spans 9 to 20 (RKGRAKITKKSK). A 3-methylthioaspartic acid modification is found at D89. The interval 105 to 124 (AGVEGRTQRRSKYGAKRPKK) is disordered. A compositionally biased stretch (basic residues) spans 112–124 (QRRSKYGAKRPKK).

It belongs to the universal ribosomal protein uS12 family. In terms of assembly, part of the 30S ribosomal subunit. Contacts proteins S8 and S17. May interact with IF1 in the 30S initiation complex.

With S4 and S5 plays an important role in translational accuracy. In terms of biological role, interacts with and stabilizes bases of the 16S rRNA that are involved in tRNA selection in the A site and with the mRNA backbone. Located at the interface of the 30S and 50S subunits, it traverses the body of the 30S subunit contacting proteins on the other side and probably holding the rRNA structure together. The combined cluster of proteins S8, S12 and S17 appears to hold together the shoulder and platform of the 30S subunit. The protein is Small ribosomal subunit protein uS12 of Christiangramia forsetii (strain DSM 17595 / CGMCC 1.15422 / KT0803) (Gramella forsetii).